The sequence spans 602 residues: RecBCD enzyme subunit RecD (602 aa).

171–178 (GGPGTGKT) is a binding site for ATP.

Belongs to the RecD family. Heterotrimer of RecB, RecC and RecD. All subunits contribute to DNA-binding.

The catalysed reaction is Couples ATP hydrolysis with the unwinding of duplex DNA at the replication fork by translocating in the 5'-3' direction. This creates two antiparallel DNA single strands (ssDNA). The leading ssDNA polymer is the template for DNA polymerase III holoenzyme which synthesizes a continuous strand.. It catalyses the reaction ATP + H2O = ADP + phosphate + H(+). Its function is as follows. A helicase/nuclease that prepares dsDNA breaks (DSB) for recombinational DNA repair. Binds to DSBs and unwinds DNA via a highly rapid and processive ATP-dependent bidirectional helicase activity. Unwinds dsDNA until it encounters a Chi (crossover hotspot instigator) sequence from the 3' direction. Cuts ssDNA a few nucleotides 3' to the Chi site. The properties and activities of the enzyme are changed at Chi. The Chi-altered holoenzyme produces a long 3'-ssDNA overhang and facilitates RecA-binding to the ssDNA for homologous DNA recombination and repair. Holoenzyme degrades any linearized DNA that is unable to undergo homologous recombination. In the holoenzyme this subunit has ssDNA-dependent ATPase and 5'-3' helicase activity. When added to pre-assembled RecBC greatly stimulates nuclease activity and augments holoenzyme processivity. Negatively regulates the RecA-loading ability of RecBCD. In Buchnera aphidicola subsp. Acyrthosiphon pisum (strain APS) (Acyrthosiphon pisum symbiotic bacterium), this protein is RecBCD enzyme subunit RecD.